The primary structure comprises 1602 residues: Calmodulin-regulated spectrin-associated protein 1 (1602 aa).

The Calponin-homology (CH) domain maps to 216 to 331 (ESPAHQKVRY…FIAELFWWFE (116 aa)). Residues Ser-217, Ser-371, Ser-375, Ser-416, and Ser-431 each carry the phosphoserine modification. Positions 426–471 (QKQQKSIQGEDIPDQRHRSNSLTRVDGQPRGAAIAWPEKKTRPASQ) are disordered. Thr-512 carries the post-translational modification Phosphothreonine. Residues Ser-563, Ser-575, and Ser-589 each carry the phosphoserine modification. Over residues 603–620 (AKEKQVITKEDERGEGRP) the composition is skewed to basic and acidic residues. Positions 603–637 (AKEKQVITKEDERGEGRPRSIVSRRPSEGPQPLVR) are disordered. Residues Ser-629, Ser-722, Ser-728, Ser-738, and Ser-740 each carry the phosphoserine modification. Residues 772–789 (KLQEDMKVKEHEDKDDAS) show a composition bias toward basic and acidic residues. Disordered regions lie at residues 772-808 (KLQE…VSMA) and 825-870 (LNSC…GKDP). Composition is skewed to low complexity over residues 797-808 (STASQMSSVSMA) and 830-841 (TKSSTSSSQKTT). Residues 857-869 (QKREQSPSQHGKD) show a composition bias toward basic and acidic residues. A sufficient for interaction with SPTBN1 region spans residues 871–892 (ASLLASELVQLHMQLEEKRRAI). 2 coiled-coil regions span residues 873 to 909 (LLAS…QRLK) and 1016 to 1048 (DVNE…QEQL). The tract at residues 903-922 (SARQRLKLGKAAFLHVVKKG) is sufficient for interaction with calmodulin. 3 disordered regions span residues 1075-1165 (FVEP…GKCL), 1206-1226 (KEVG…VEEP), and 1301-1448 (ARVR…DWET). Position 1080 is a phosphoserine (Ser-1080). Residues 1103–1114 (RPAELKVPKDRP) show a composition bias toward basic and acidic residues. Residues 1115–1127 (QGSSRSKTPTPSV) show a composition bias toward polar residues. Residues 1206–1220 (KEVGSSSSDVSGKES) show a composition bias toward low complexity. The stretch at 1291–1343 (LLKQQRKAEEARVRKQQLEAEVELKRDEARRKAEEDRVRKEEEKARRELIKQE) forms a coiled coil. Residues 1301 to 1346 (ARVRKQQLEAEVELKRDEARRKAEEDRVRKEEEKARRELIKQEYLR) show a composition bias toward basic and acidic residues. Residues 1361 to 1372 (PKSKPKKPRPKS) are compositionally biased toward basic residues. Over residues 1380-1392 (SDSGTKCSSTPDN) the composition is skewed to polar residues. Residues 1393 to 1410 (LSRTQSGSSLSLASAATT) are compositionally biased toward low complexity. Phosphoserine occurs at positions 1398 and 1427. Residues 1463 to 1597 (GPKLFKEPSS…QPKRPAVPKK (135 aa)) form the CKK domain. Tyr-1537 is modified (phosphotyrosine).

It belongs to the CAMSAP1 family. As to quaternary structure, interacts with spectrin via SPTBN1; the interaction is direct. Interacts with calmodulin; calcium-dependent it prevents interaction with spectrin.

It localises to the cytoplasm. The protein localises to the cytoskeleton. Key microtubule-organizing protein that specifically binds the minus-end of non-centrosomal microtubules and regulates their dynamics and organization. Specifically recognizes growing microtubule minus-ends and stabilizes microtubules. Acts on free microtubule minus-ends that are not capped by microtubule-nucleating proteins or other factors and protects microtubule minus-ends from depolymerization. In contrast to CAMSAP2 and CAMSAP3, tracks along the growing tips of minus-end microtubules without significantly affecting the polymerization rate: binds at the very tip of the microtubules minus-end and acts as a minus-end tracking protein (-TIP) that dissociates from microtubules after allowing tubulin incorporation. Through interaction with spectrin may regulate neurite outgrowth. This is Calmodulin-regulated spectrin-associated protein 1 (CAMSAP1) from Homo sapiens (Human).